The primary structure comprises 415 residues: Leucine-rich repeat-containing protein 34 (415 aa).

LRR repeat units lie at residues 246–272 and 274–296; these read SLRY…LKSN and TLEV…LSET.

Interacts with NPM1 and NCL. As to expression, expressed in testis where it specifically localizes to germ cells (at protein level). Not detected in other tissues tested (at protein level). Expressed in pluripotent embryonic stem cells and multipotent adult germline stem cells.

Its subcellular location is the nucleus. It localises to the nucleolus. The protein resides in the cytoplasm. Functionally, highly expressed in stem cells where it may be involved in regulation of pluripotency. In embryonic stem cells (ESCs), important for normal expression of the pluripotency regulators POU5F1/OCT4 and KLF4. Also important for expression of the ectodermal marker gene NES and the endodermal marker gene GATA4. Promotes stem cell proliferation in vitro. The sequence is that of Leucine-rich repeat-containing protein 34 from Mus musculus (Mouse).